The sequence spans 119 residues: Small ribosomal subunit protein uS13m (119 aa).

Belongs to the universal ribosomal protein uS13 family. Part of the small ribosomal subunit.

The protein localises to the mitochondrion. Located at the top of the head of the small subunit, it contacts several helices of the small subunit rRNA. The sequence is that of Small ribosomal subunit protein uS13m (RPS13) from Acanthamoeba castellanii (Amoeba).